A 564-amino-acid polypeptide reads, in one-letter code: Urocanate hydratase (564 aa).

NAD(+) contacts are provided by residues 58 to 59 (GG), Q136, 182 to 184 (GMG), E202, R207, 248 to 249 (NA), 269 to 273 (QTSAH), 279 to 280 (YL), and Y328. Residue C416 is part of the active site. NAD(+) is bound at residue G498.

This sequence belongs to the urocanase family. Requires NAD(+) as cofactor.

Its subcellular location is the cytoplasm. It carries out the reaction 4-imidazolone-5-propanoate = trans-urocanate + H2O. The protein operates within amino-acid degradation; L-histidine degradation into L-glutamate; N-formimidoyl-L-glutamate from L-histidine: step 2/3. Catalyzes the conversion of urocanate to 4-imidazolone-5-propionate. This is Urocanate hydratase from Aliivibrio salmonicida (strain LFI1238) (Vibrio salmonicida (strain LFI1238)).